Here is an 88-residue protein sequence, read N- to C-terminus: uncharacterized protein (88 aa).

Residues 1-88 form a disordered region; that stretch reads MPHLPELSKQ…IRRGNPSGVA (88 aa). The span at 21 to 65 shows a compositional bias: basic and acidic residues; that stretch reads YRAKGEDLENSHHNNESRLAEGVHYDRNKAPALQEREKASTEKVN.

Its function is as follows. Involved in osmoadaptation. This is an uncharacterized protein from Emericella nidulans (strain FGSC A4 / ATCC 38163 / CBS 112.46 / NRRL 194 / M139) (Aspergillus nidulans).